A 184-amino-acid chain; its full sequence is MNRRSERIWIEFIMGSRKTSNFCWACILLLGSLGFLLVGISSYLGRNLISLFPSQQINFFPQGIVMSFYGIAGLFISSYLWSTILWNIGSGYDRFDRKEGIVCIFRWGFPGINRRIFLRVFMGDIQSIRIEVKGGVYPRRVLYMDIRGQGSVPLTRTDENFTPREIEQKAAESAYFLRVPIEVF.

The next 2 membrane-spanning stretches (helical) occupy residues 22 to 42 (FCWA…GISS) and 64 to 84 (IVMS…WSTI).

The protein belongs to the Ycf4 family.

Its subcellular location is the plastid. It localises to the chloroplast thylakoid membrane. Functionally, seems to be required for the assembly of the photosystem I complex. The chain is Photosystem I assembly protein Ycf4 from Piper cenocladum (Ant piper).